The following is a 438-amino-acid chain: Dihydroorotase (438 aa).

Zn(2+)-binding residues include histidine 58 and histidine 60. Substrate contacts are provided by residues 60–62 (HLR) and asparagine 92. Positions 152, 179, and 232 each coordinate Zn(2+). Asparagine 278 contributes to the substrate binding site. A Zn(2+)-binding site is contributed by aspartate 305. Residue aspartate 305 is part of the active site. Substrate-binding positions include histidine 309 and 323 to 324 (FG).

The protein belongs to the metallo-dependent hydrolases superfamily. DHOase family. Class I DHOase subfamily. Requires Zn(2+) as cofactor.

The enzyme catalyses (S)-dihydroorotate + H2O = N-carbamoyl-L-aspartate + H(+). Its pathway is pyrimidine metabolism; UMP biosynthesis via de novo pathway; (S)-dihydroorotate from bicarbonate: step 3/3. Functionally, catalyzes the reversible cyclization of carbamoyl aspartate to dihydroorotate. In Leifsonia xyli subsp. xyli (strain CTCB07), this protein is Dihydroorotase.